The primary structure comprises 98 residues: PqqA binding protein (98 aa).

This sequence belongs to the PqqD family. Monomer. Interacts with PqqE.

The protein operates within cofactor biosynthesis; pyrroloquinoline quinone biosynthesis. Its function is as follows. Functions as a PqqA binding protein and presents PqqA to PqqE, in the pyrroloquinoline quinone (PQQ) biosynthetic pathway. The chain is PqqA binding protein from Pseudomonas syringae pv. tomato (strain ATCC BAA-871 / DC3000).